We begin with the raw amino-acid sequence, 73 residues long: Translation initiation factor IF-1 (73 aa).

The 73-residue stretch at 1–73 (MANKEELIEF…TKGRITYRAR (73 aa)) folds into the S1-like domain.

Belongs to the IF-1 family. In terms of assembly, component of the 30S ribosomal translation pre-initiation complex which assembles on the 30S ribosome in the order IF-2 and IF-3, IF-1 and N-formylmethionyl-tRNA(fMet); mRNA recruitment can occur at any time during PIC assembly.

It localises to the cytoplasm. In terms of biological role, one of the essential components for the initiation of protein synthesis. Stabilizes the binding of IF-2 and IF-3 on the 30S subunit to which N-formylmethionyl-tRNA(fMet) subsequently binds. Helps modulate mRNA selection, yielding the 30S pre-initiation complex (PIC). Upon addition of the 50S ribosomal subunit IF-1, IF-2 and IF-3 are released leaving the mature 70S translation initiation complex. This Acinetobacter baumannii (strain ATCC 17978 / DSM 105126 / CIP 53.77 / LMG 1025 / NCDC KC755 / 5377) protein is Translation initiation factor IF-1.